The primary structure comprises 161 residues: Disulfide bond formation protein B (161 aa).

Residues 1–8 (MQANSRTY) are Cytoplasmic-facing. The helical transmembrane segment at 9 to 25 (FLLIAIVSFAMVGAALY) threads the bilayer. The Periplasmic portion of the chain corresponds to 26 to 43 (MQYAENLQPCPLCIMQRF). Cysteine 35 and cysteine 38 are joined by a disulfide. Residues 44–58 (AFIGIGIFSLLAVIA) form a helical membrane-spanning segment. Residues 59-63 (QNTRT) are Cytoplasmic-facing. Residues 64 to 81 (LWQGLGMLSGVGGIAVAG) form a helical membrane-spanning segment. Topologically, residues 82–136 (YQVALLMNPKASCGIDPLENWVNSLPTAKLLPQVFYSDGLCTAPTPPILGLSIPA) are periplasmic. Cysteine 94 and cysteine 122 are oxidised to a cystine. The chain crosses the membrane as a helical span at residues 137–155 (WSLIWLLILTLTLAVGLIR). The Cytoplasmic segment spans residues 156-161 (REKHFR).

Belongs to the DsbB family.

Its subcellular location is the cell inner membrane. Required for disulfide bond formation in some periplasmic proteins. Acts by oxidizing the DsbA protein. This chain is Disulfide bond formation protein B, found in Cupriavidus metallidurans (strain ATCC 43123 / DSM 2839 / NBRC 102507 / CH34) (Ralstonia metallidurans).